The following is a 389-amino-acid chain: Equilibrative nucleotide transporter 8 (389 aa).

The next 10 membrane-spanning stretches (helical) occupy residues Val-19 to Ile-39, Thr-57 to Asn-77, Asn-87 to Trp-107, Leu-119 to Ile-139, Met-150 to Ala-170, His-187 to Leu-207, Trp-238 to Ile-258, Leu-266 to Gly-286, Val-331 to Ile-351, and Ile-367 to Trp-387.

Belongs to the SLC29A/ENT transporter (TC 2.A.57) family. Expressed in stems, flowers and siliques.

The protein resides in the cell membrane. In terms of biological role, may be involved in nucleoside transport. The protein is Equilibrative nucleotide transporter 8 (ETN8) of Arabidopsis thaliana (Mouse-ear cress).